Reading from the N-terminus, the 303-residue chain is Aspartate carbamoyltransferase catalytic subunit (303 aa).

2 residues coordinate carbamoyl phosphate: Arg49 and Thr50. Lys77 contributes to the L-aspartate binding site. Carbamoyl phosphate contacts are provided by Arg99, His126, and Gln129. Residues Arg159 and Arg211 each contribute to the L-aspartate site. Carbamoyl phosphate contacts are provided by Ser252 and Pro253.

This sequence belongs to the aspartate/ornithine carbamoyltransferase superfamily. ATCase family. Heterododecamer (2C3:3R2) of six catalytic PyrB chains organized as two trimers (C3), and six regulatory PyrI chains organized as three dimers (R2).

It catalyses the reaction carbamoyl phosphate + L-aspartate = N-carbamoyl-L-aspartate + phosphate + H(+). Its pathway is pyrimidine metabolism; UMP biosynthesis via de novo pathway; (S)-dihydroorotate from bicarbonate: step 2/3. Catalyzes the condensation of carbamoyl phosphate and aspartate to form carbamoyl aspartate and inorganic phosphate, the committed step in the de novo pyrimidine nucleotide biosynthesis pathway. This is Aspartate carbamoyltransferase catalytic subunit from Listeria welshimeri serovar 6b (strain ATCC 35897 / DSM 20650 / CCUG 15529 / CIP 8149 / NCTC 11857 / SLCC 5334 / V8).